We begin with the raw amino-acid sequence, 164 residues long: V-type proton ATPase 16 kDa proteolipid subunit (164 aa).

Over 1–10 the chain is Lumenal; it reads MSDLCPPTAP. Residues 11-31 traverse the membrane as a helical segment; it reads FFGFMGAAVALIFANLGAAYG. At 32-53 the chain is on the cytoplasmic side; sequence TAKSGVGVSSMGVMKPDLVMKS. Residues 54-74 form a helical membrane-spanning segment; that stretch reads IIPVVMAGVLGIYGLIIAVII. The Lumenal portion of the chain corresponds to 75–96; that stretch reads GNGVKGPEGGKPQYSSFTGFAH. Residues 97–118 traverse the membrane as a helical segment; it reads LAAGLACGLSGMAAGIAIGIVG. At 119–130 the chain is on the cytoplasmic side; the sequence is DAGVRASAQQAK. A helical transmembrane segment spans residues 131 to 155; that stretch reads LYVGMVLILIFAEALGLYGLIVGLI. Residues 156-164 are Lumenal-facing; the sequence is LTSKEAPCS.

It belongs to the V-ATPase proteolipid subunit family. As to quaternary structure, V-ATPase is a heteromultimeric enzyme composed of a peripheral catalytic V1 complex (main components: subunits A, B, C, D, E, and F) attached to an integral membrane V0 proton pore complex (main component: the proteolipid protein; which is present as a hexamer that forms the proton-conducting pore).

The protein localises to the vacuole membrane. Functionally, proton-conducting pore forming subunit of the membrane integral V0 complex of vacuolar ATPase. V-ATPase is responsible for acidifying a variety of intracellular compartments in eukaryotic cells. This chain is V-type proton ATPase 16 kDa proteolipid subunit (VAP), found in Chrysotila carterae (Marine alga).